Consider the following 35-residue polypeptide: Cupiennin-2b (35 aa).

Gln-35 is subject to Glutamine amide.

In terms of tissue distribution, expressed by the venom gland.

It is found in the secreted. This Cupiennius salei (American wandering spider) protein is Cupiennin-2b.